A 99-amino-acid polypeptide reads, in one-letter code: DNA-binding protein Fis (99 aa).

Positions 75–94 (QTRAASIMGINRSTLRKKLK) form a DNA-binding region, H-T-H motif.

This sequence belongs to the transcriptional regulatory Fis family. In terms of assembly, homodimer.

Its function is as follows. Activates ribosomal RNA transcription. Plays a direct role in upstream activation of rRNA promoters. The chain is DNA-binding protein Fis from Buchnera aphidicola subsp. Schizaphis graminum (strain Sg).